Reading from the N-terminus, the 151-residue chain is Endoribonuclease YbeY (151 aa).

The Zn(2+) site is built by His-108, His-112, and Asp-118.

It belongs to the endoribonuclease YbeY family. The cofactor is Zn(2+).

The protein localises to the cytoplasm. Single strand-specific metallo-endoribonuclease involved in late-stage 70S ribosome quality control and in maturation of the 3' terminus of the 16S rRNA. This chain is Endoribonuclease YbeY, found in Porphyromonas gingivalis (strain ATCC BAA-308 / W83).